Consider the following 78-residue polypeptide: Large ribosomal subunit protein bL28 (78 aa).

The interval 1 to 21 (MSRVCQVTGKRPMSGNNRSHA) is disordered.

It belongs to the bacterial ribosomal protein bL28 family.

The sequence is that of Large ribosomal subunit protein bL28 from Photorhabdus laumondii subsp. laumondii (strain DSM 15139 / CIP 105565 / TT01) (Photorhabdus luminescens subsp. laumondii).